The following is a 300-amino-acid chain: Cation-efflux pump FieF (300 aa).

A helical membrane pass occupies residues 24 to 44 (LLIKILAWWYTGSVSILAALV). The Zn(2+) site is built by aspartate 45 and aspartate 49. 2 consecutive transmembrane segments (helical) span residues 82-102 (AALA…LTSI) and 114-134 (PGVG…LVTF). Zn(2+)-binding residues include histidine 153 and aspartate 157. Transmembrane regions (helical) follow at residues 156 to 176 (SDVM…YGWH) and 178 to 198 (ADAL…LRMG).

The protein belongs to the cation diffusion facilitator (CDF) transporter (TC 2.A.4) family. FieF subfamily. Homodimer.

It is found in the cell inner membrane. It carries out the reaction Zn(2+)(in) + H(+)(out) = Zn(2+)(out) + H(+)(in). The enzyme catalyses Cd(2+)(in) + H(+)(out) = Cd(2+)(out) + H(+)(in). It catalyses the reaction Fe(2+)(in) + H(+)(out) = Fe(2+)(out) + H(+)(in). Its function is as follows. Divalent metal cation transporter which exports Zn(2+), Cd(2+) and possibly Fe(2+). May be involved in zinc and iron detoxification by efflux. The polypeptide is Cation-efflux pump FieF (Salmonella agona (strain SL483)).